We begin with the raw amino-acid sequence, 208 residues long: ATP phosphoribosyltransferase (208 aa).

Belongs to the ATP phosphoribosyltransferase family. Short subfamily. In terms of assembly, heteromultimer composed of HisG and HisZ subunits.

It is found in the cytoplasm. The catalysed reaction is 1-(5-phospho-beta-D-ribosyl)-ATP + diphosphate = 5-phospho-alpha-D-ribose 1-diphosphate + ATP. Its pathway is amino-acid biosynthesis; L-histidine biosynthesis; L-histidine from 5-phospho-alpha-D-ribose 1-diphosphate: step 1/9. Its function is as follows. Catalyzes the condensation of ATP and 5-phosphoribose 1-diphosphate to form N'-(5'-phosphoribosyl)-ATP (PR-ATP). Has a crucial role in the pathway because the rate of histidine biosynthesis seems to be controlled primarily by regulation of HisG enzymatic activity. This Hydrogenovibrio crunogenus (strain DSM 25203 / XCL-2) (Thiomicrospira crunogena) protein is ATP phosphoribosyltransferase.